The primary structure comprises 1382 residues: DNA-directed RNA polymerase subunit beta'' (1382 aa).

Positions 224, 294, 301, and 304 each coordinate Zn(2+).

This sequence belongs to the RNA polymerase beta' chain family. RpoC2 subfamily. In terms of assembly, in plastids the minimal PEP RNA polymerase catalytic core is composed of four subunits: alpha, beta, beta', and beta''. When a (nuclear-encoded) sigma factor is associated with the core the holoenzyme is formed, which can initiate transcription. Zn(2+) is required as a cofactor.

The protein resides in the plastid. It is found in the chloroplast. The enzyme catalyses RNA(n) + a ribonucleoside 5'-triphosphate = RNA(n+1) + diphosphate. Its function is as follows. DNA-dependent RNA polymerase catalyzes the transcription of DNA into RNA using the four ribonucleoside triphosphates as substrates. The chain is DNA-directed RNA polymerase subunit beta'' from Dioscorea elephantipes (Elephant's foot yam).